The primary structure comprises 211 residues: MIKGCGCSDGLTDRTRYEEVVLDTMLYSAQLKERVARQNSAVIVAMARMIAGTFEDGGKVLLCGNGGSAADAQHLATELTIRYRSSVERPALPAIALSTDTSALTAGANDLGYDAVFARLVEAYGREGDILLGLSTSGNSQSVINALDFARQQGMKTLALLGGNGGLMKGLADLELIVPHSGSADRVQECHITIGHVLIDLVERMLGYCRL.

The SIS domain maps to 50-211 (IAGTFEDGGK…VERMLGYCRL (162 aa)). 65 to 67 (NGG) contacts substrate. Residues H74 and E78 each contribute to the Zn(2+) site. Residues E78, 109–110 (ND), 135–137 (STS), S140, and Q188 each bind substrate. The Zn(2+) site is built by Q188 and H196.

Belongs to the SIS family. GmhA subfamily. Zn(2+) is required as a cofactor.

The protein resides in the cytoplasm. The enzyme catalyses 2 D-sedoheptulose 7-phosphate = D-glycero-alpha-D-manno-heptose 7-phosphate + D-glycero-beta-D-manno-heptose 7-phosphate. It functions in the pathway carbohydrate biosynthesis; D-glycero-D-manno-heptose 7-phosphate biosynthesis; D-glycero-alpha-D-manno-heptose 7-phosphate and D-glycero-beta-D-manno-heptose 7-phosphate from sedoheptulose 7-phosphate: step 1/1. Its function is as follows. Catalyzes the isomerization of sedoheptulose 7-phosphate in D-glycero-D-manno-heptose 7-phosphate. The sequence is that of Phosphoheptose isomerase from Pelodictyon phaeoclathratiforme (strain DSM 5477 / BU-1).